Here is a 340-residue protein sequence, read N- to C-terminus: Dihydroorotate dehydrogenase (quinone) (340 aa).

Residues 65 to 69 (AGADK) and T89 contribute to the FMN site. K69 contacts substrate. 114–118 (NRNGF) contributes to the substrate binding site. 2 residues coordinate FMN: N142 and N175. Residue N175 participates in substrate binding. The active-site Nucleophile is S178. Residue N180 participates in substrate binding. Positions 220 and 248 each coordinate FMN. Residue 249-250 (NT) participates in substrate binding. Residues G271, G300, and 321 to 322 (YS) contribute to the FMN site.

Belongs to the dihydroorotate dehydrogenase family. Type 2 subfamily. Monomer. FMN is required as a cofactor.

Its subcellular location is the cell membrane. It catalyses the reaction (S)-dihydroorotate + a quinone = orotate + a quinol. Its pathway is pyrimidine metabolism; UMP biosynthesis via de novo pathway; orotate from (S)-dihydroorotate (quinone route): step 1/1. In terms of biological role, catalyzes the conversion of dihydroorotate to orotate with quinone as electron acceptor. This chain is Dihydroorotate dehydrogenase (quinone), found in Mannheimia succiniciproducens (strain KCTC 0769BP / MBEL55E).